We begin with the raw amino-acid sequence, 353 residues long: UDP-N-acetylglucosamine--N-acetylmuramyl-(pentapeptide) pyrophosphoryl-undecaprenol N-acetylglucosamine transferase (353 aa).

Residues 11-13, Arg164, Ser194, and Gln289 each bind UDP-N-acetyl-alpha-D-glucosamine; that span reads SAG.

It belongs to the glycosyltransferase 28 family. MurG subfamily.

The protein localises to the cell membrane. The catalysed reaction is di-trans,octa-cis-undecaprenyl diphospho-N-acetyl-alpha-D-muramoyl-L-alanyl-D-glutamyl-meso-2,6-diaminopimeloyl-D-alanyl-D-alanine + UDP-N-acetyl-alpha-D-glucosamine = di-trans,octa-cis-undecaprenyl diphospho-[N-acetyl-alpha-D-glucosaminyl-(1-&gt;4)]-N-acetyl-alpha-D-muramoyl-L-alanyl-D-glutamyl-meso-2,6-diaminopimeloyl-D-alanyl-D-alanine + UDP + H(+). The protein operates within cell wall biogenesis; peptidoglycan biosynthesis. Cell wall formation. Catalyzes the transfer of a GlcNAc subunit on undecaprenyl-pyrophosphoryl-MurNAc-pentapeptide (lipid intermediate I) to form undecaprenyl-pyrophosphoryl-MurNAc-(pentapeptide)GlcNAc (lipid intermediate II). This is UDP-N-acetylglucosamine--N-acetylmuramyl-(pentapeptide) pyrophosphoryl-undecaprenol N-acetylglucosamine transferase from Clostridium kluyveri (strain ATCC 8527 / DSM 555 / NBRC 12016 / NCIMB 10680 / K1).